Here is a 340-residue protein sequence, read N- to C-terminus: HPr kinase/phosphorylase (340 aa).

Catalysis depends on residues H153 and K174. 168–175 (GNSGLGKS) lines the ATP pocket. S175 provides a ligand contact to Mg(2+). Catalysis depends on D192, which acts as the Proton acceptor; for phosphorylation activity. Proton donor; for dephosphorylation activity. The tract at residues 216 to 225 (MEIRGLGVVD) is important for the catalytic mechanism of both phosphorylation and dephosphorylation. A Mg(2+)-binding site is contributed by E217. Residue R258 is part of the active site. Residues 279–284 (PINPGK) are important for the catalytic mechanism of dephosphorylation.

The protein belongs to the HPrK/P family. In terms of assembly, homohexamer. Mg(2+) serves as cofactor.

The catalysed reaction is [HPr protein]-L-serine + ATP = [HPr protein]-O-phospho-L-serine + ADP + H(+). It carries out the reaction [HPr protein]-O-phospho-L-serine + phosphate + H(+) = [HPr protein]-L-serine + diphosphate. Functionally, catalyzes the ATP- as well as the pyrophosphate-dependent phosphorylation of a specific serine residue in HPr, a phosphocarrier protein of the phosphoenolpyruvate-dependent sugar phosphotransferase system (PTS). HprK/P also catalyzes the pyrophosphate-producing, inorganic phosphate-dependent dephosphorylation (phosphorolysis) of seryl-phosphorylated HPr (P-Ser-HPr). This is HPr kinase/phosphorylase from Prosthecochloris aestuarii (strain DSM 271 / SK 413).